The chain runs to 596 residues: Elongation factor 4 (596 aa).

The tr-type G domain occupies 2 to 184 (KQIRNFSIIA…VIVAKIPPPE (183 aa)). GTP contacts are provided by residues 14 to 19 (DHGKST) and 131 to 134 (NKID).

It belongs to the TRAFAC class translation factor GTPase superfamily. Classic translation factor GTPase family. LepA subfamily.

It is found in the cell inner membrane. The enzyme catalyses GTP + H2O = GDP + phosphate + H(+). Functionally, required for accurate and efficient protein synthesis under certain stress conditions. May act as a fidelity factor of the translation reaction, by catalyzing a one-codon backward translocation of tRNAs on improperly translocated ribosomes. Back-translocation proceeds from a post-translocation (POST) complex to a pre-translocation (PRE) complex, thus giving elongation factor G a second chance to translocate the tRNAs correctly. Binds to ribosomes in a GTP-dependent manner. This chain is Elongation factor 4, found in Shewanella baltica (strain OS223).